Consider the following 159-residue polypeptide: Acetolactate synthase small subunit (159 aa).

The ACT domain occupies 5 to 79 (ILSILLENES…DVLKVTEIED (75 aa)).

The protein belongs to the acetolactate synthase small subunit family. As to quaternary structure, dimer of large and small chains.

The catalysed reaction is 2 pyruvate + H(+) = (2S)-2-acetolactate + CO2. It functions in the pathway amino-acid biosynthesis; L-isoleucine biosynthesis; L-isoleucine from 2-oxobutanoate: step 1/4. Its pathway is amino-acid biosynthesis; L-valine biosynthesis; L-valine from pyruvate: step 1/4. The polypeptide is Acetolactate synthase small subunit (ilvH) (Buchnera aphidicola subsp. Baizongia pistaciae (strain Bp)).